The sequence spans 316 residues: Inactive peptidyl-prolyl cis-trans isomerase FKBP6 (316 aa).

One can recognise a PPIase FKBP-type domain in the interval 43-132 (DASVLVKYSG…LFEIELLDFL (90 aa)). TPR repeat units follow at residues 160-193 (AATE…LHRR), 208-241 (LLVL…DQKN), and 242-275 (AKAL…QPFN).

It belongs to the FKBP6 family. In terms of assembly, interacts with HSP72/HSPA2 and CLTC. Interacts with GAPDH; leading to inhibit GAPDH catalytic activity. Interacts (via TPR repeats) with HSP90. Specifically expressed in testis and sperm.

It localises to the cytoplasm. Its subcellular location is the cytosol. It is found in the nucleus. Its function is as follows. Co-chaperone required during spermatogenesis to repress transposable elements and prevent their mobilization, which is essential for the germline integrity. Acts via the piRNA metabolic process, which mediates the repression of transposable elements during meiosis by forming complexes composed of piRNAs and Piwi proteins and govern the methylation and subsequent repression of transposons. Acts as a co-chaperone via its interaction with HSP90 and is required for the piRNA amplification process, the secondary piRNA biogenesis. May be required together with HSP90 in removal of 16 nucleotide ping-pong by-products from Piwi complexes, possibly facilitating turnover of Piwi complexes. The polypeptide is Inactive peptidyl-prolyl cis-trans isomerase FKBP6 (FKBP6) (Equus caballus (Horse)).